We begin with the raw amino-acid sequence, 108 residues long: DNA-directed RNA polymerase III subunit RPC10 (108 aa).

6 residues coordinate Zn(2+): Cys5, Cys8, Cys25, Cys28, Cys69, and Cys72. The C4-type zinc-finger motif lies at 5–28 (CPGCGNGLIVEEGQRCHRFACNTC). The segment at 65-107 (TAESCPKCEHPRAYFMQLQTRSADEPMTTFYKCCNAQCGHRWR) adopts a TFIIS-type zinc-finger fold. The short motif at 88-89 (DE) is the Hairpin element. Residues Cys98 and Cys102 each coordinate Zn(2+).

The protein belongs to the archaeal RpoM/eukaryotic RPA12/RPB9/RPC11 RNA polymerase family. In terms of assembly, component of the RNA polymerase III complex consisting of 17 subunits: a ten-subunit horseshoe-shaped catalytic core composed of POLR3A/RPC1, POLR3B/RPC2, POLR1C/RPAC1, POLR1D/RPAC2, POLR3K/RPC10, POLR2E/RPABC1, POLR2F/RPABC2, POLR2H/RPABC3, POLR2K/RPABC4 and POLR2L/RPABC5; a mobile stalk composed of two subunits POLR3H/RPC8 and CRCP/RPC9, protruding from the core and functioning primarily in transcription initiation; and additional subunits homologous to general transcription factors of the RNA polymerase II machinery, POLR3C/RPC3-POLR3F/RPC6-POLR3G/RPC7 heterotrimer required for transcription initiation and POLR3D/RPC4-POLR3E/RPC5 heterodimer involved in both transcription initiation and termination.

The protein resides in the nucleus. Core component of RNA polymerase III (Pol III) which synthesizes small non-coding RNAs using the four ribonucleoside triphosphates as substrates. Can mediate Pol I proofreading of the nascent RNA transcript. Anchors into the Pol III active site to constantly monitor transcription fidelity, cleaves mis-incorporated 5'-ribonucleotides and restarts the transcription process. Once Pol III reaches the poly(dT) termination signal, can induce Pol III clamp opening and transcription termination. Pol III plays an important role in sensing and limiting infection by intracellular bacteria and DNA viruses. Acts as a nuclear and cytosolic DNA sensor involved in innate immune response. Can sense non-self dsDNA that serves as template for transcription into dsRNA. The non-self RNA polymerase III transcripts, such as Epstein-Barr virus-encoded RNAs (EBERs) induce type I interferon and NF-kappa-B through the RIG-I pathway. This Homo sapiens (Human) protein is DNA-directed RNA polymerase III subunit RPC10.